Reading from the N-terminus, the 237-residue chain is tRNA (guanine-N(7)-)-methyltransferase (237 aa).

Residues E67, E92, D119, and D141 each coordinate S-adenosyl-L-methionine. D141 is an active-site residue. Substrate is bound by residues K145, D177, and 214–217 (TRYE).

It belongs to the class I-like SAM-binding methyltransferase superfamily. TrmB family.

The enzyme catalyses guanosine(46) in tRNA + S-adenosyl-L-methionine = N(7)-methylguanosine(46) in tRNA + S-adenosyl-L-homocysteine. It participates in tRNA modification; N(7)-methylguanine-tRNA biosynthesis. Functionally, catalyzes the formation of N(7)-methylguanine at position 46 (m7G46) in tRNA. This chain is tRNA (guanine-N(7)-)-methyltransferase, found in Jannaschia sp. (strain CCS1).